A 340-amino-acid chain; its full sequence is Phosphate acyltransferase (340 aa).

The protein belongs to the PlsX family. Homodimer. Probably interacts with PlsY.

Its subcellular location is the cytoplasm. The enzyme catalyses a fatty acyl-[ACP] + phosphate = an acyl phosphate + holo-[ACP]. It functions in the pathway lipid metabolism; phospholipid metabolism. In terms of biological role, catalyzes the reversible formation of acyl-phosphate (acyl-PO(4)) from acyl-[acyl-carrier-protein] (acyl-ACP). This enzyme utilizes acyl-ACP as fatty acyl donor, but not acyl-CoA. This chain is Phosphate acyltransferase, found in Trichodesmium erythraeum (strain IMS101).